The following is a 90-amino-acid chain: Gene 56 protein (90 aa).

Residues 1 to 90 (MRTMFTPITI…DYYTASETGL (90 aa)) enclose the Glutaredoxin domain. Residues Cys16 and Cys19 are joined by a disulfide bond.

The chain is Gene 56 protein (56) from Mycobacterium phage D29 (Mycobacteriophage D29).